A 939-amino-acid polypeptide reads, in one-letter code: Translation initiation factor IF-2 (939 aa).

Positions 57–274 (RLKPAAPAAP…APTKKNEQKI (218 aa)) are disordered. Composition is skewed to basic and acidic residues over residues 83–122 (MEPKEEPQKEVKESVKEAPESLPESPKEEAFEAEIPKESV) and 129–138 (LEQEPPKEEL). 2 stretches are compositionally biased toward polar residues: residues 146-158 (ESASETLSDSNPL) and 170-180 (VATTLATQTDA). Basic and acidic residues predominate over residues 208 to 227 (KRSEEPAPKADRPSLEEART). The span at 252 to 262 (ARKKKKEKKKP) shows a compositional bias: basic residues. The tr-type G domain maps to 438–607 (ERPPVVTIMG…LVQSELLELK (170 aa)). Residues 447-454 (GHVDHGKT) form a G1 region. 447 to 454 (GHVDHGKT) lines the GTP pocket. Positions 472–476 (GITQH) are G2. Residues 493–496 (DTPG) form a G3 region. Residues 493 to 497 (DTPGH) and 547 to 550 (NKVD) each bind GTP. A G4 region spans residues 547 to 550 (NKVD). The segment at 583–585 (SAK) is G5.

Belongs to the TRAFAC class translation factor GTPase superfamily. Classic translation factor GTPase family. IF-2 subfamily.

It is found in the cytoplasm. In terms of biological role, one of the essential components for the initiation of protein synthesis. Protects formylmethionyl-tRNA from spontaneous hydrolysis and promotes its binding to the 30S ribosomal subunits. Also involved in the hydrolysis of GTP during the formation of the 70S ribosomal complex. In Wolinella succinogenes (strain ATCC 29543 / DSM 1740 / CCUG 13145 / JCM 31913 / LMG 7466 / NCTC 11488 / FDC 602W) (Vibrio succinogenes), this protein is Translation initiation factor IF-2.